Here is a 146-residue protein sequence, read N- to C-terminus: Universal stress protein A homolog 2 (146 aa).

This sequence belongs to the universal stress protein A family. In terms of assembly, homodimer.

The protein localises to the cytoplasm. Functionally, involved in stress response. The polypeptide is Universal stress protein A homolog 2 (uspA2) (Coxiella burnetii (strain RSA 493 / Nine Mile phase I)).